The primary structure comprises 362 residues: 3-isopropylmalate dehydrogenase (362 aa).

NAD(+) is bound at residue 77–88 (GPKWGTGSVRPE). Positions 95, 105, 134, and 223 each coordinate substrate. Mg(2+) contacts are provided by aspartate 223, aspartate 248, and aspartate 252. Position 287 to 298 (287 to 298 (GSAPDLPKGKVN)) interacts with NAD(+).

It belongs to the isocitrate and isopropylmalate dehydrogenases family. In terms of assembly, homodimer. Requires Mg(2+) as cofactor. It depends on Mn(2+) as a cofactor.

Its subcellular location is the cytoplasm. The catalysed reaction is (2R,3S)-3-isopropylmalate + NAD(+) = 4-methyl-2-oxopentanoate + CO2 + NADH. The protein operates within amino-acid biosynthesis; L-leucine biosynthesis; L-leucine from 3-methyl-2-oxobutanoate: step 3/4. Its function is as follows. Catalyzes the oxidation of 3-carboxy-2-hydroxy-4-methylpentanoate (3-isopropylmalate) to 3-carboxy-4-methyl-2-oxopentanoate. The product decarboxylates to 4-methyl-2 oxopentanoate. This Zygosaccharomyces rouxii (strain ATCC 2623 / CBS 732 / NBRC 1130 / NCYC 568 / NRRL Y-229) protein is 3-isopropylmalate dehydrogenase (LEU2).